The chain runs to 213 residues: MTIDLIDFKMTKEGLVLVIKDYDNLEDVVNQLTSKISQMSGFFAAGDKIMLMIENNEKHSHDMPRIISILKKMGIEVSQILMGVTAKEGINVRGRMKMVEEGETKSGTKVVKKNLRSGQALVHSGDVIVIGNVHSGAEIMAGGSIVVFGNVKGILRAGLNESDSIVAALSMEPSLIQISEYILREAGSYDEPVVVHVKQNKIVIESAKDVKFQ.

It belongs to the MinC family. As to quaternary structure, interacts with MinD and FtsZ.

Cell division inhibitor that blocks the formation of polar Z ring septums. Rapidly oscillates between the poles of the cell to destabilize FtsZ filaments that have formed before they mature into polar Z rings. Prevents FtsZ polymerization. The sequence is that of Probable septum site-determining protein MinC from Pseudothermotoga lettingae (strain ATCC BAA-301 / DSM 14385 / NBRC 107922 / TMO) (Thermotoga lettingae).